Reading from the N-terminus, the 425-residue chain is Phosphoribosylamine--glycine ligase (425 aa).

In terms of domain architecture, ATP-grasp spans Lys-107 to Asp-312. Position 133-193 (Val-133–Ser-193) interacts with ATP. The tract at residues Arg-214–Ala-233 is disordered. Mg(2+) is bound by residues Glu-282 and Asn-284.

Belongs to the GARS family. Mg(2+) serves as cofactor. Requires Mn(2+) as cofactor.

It catalyses the reaction 5-phospho-beta-D-ribosylamine + glycine + ATP = N(1)-(5-phospho-beta-D-ribosyl)glycinamide + ADP + phosphate + H(+). Its pathway is purine metabolism; IMP biosynthesis via de novo pathway; N(1)-(5-phospho-D-ribosyl)glycinamide from 5-phospho-alpha-D-ribose 1-diphosphate: step 2/2. The protein is Phosphoribosylamine--glycine ligase of Mesorhizobium japonicum (strain LMG 29417 / CECT 9101 / MAFF 303099) (Mesorhizobium loti (strain MAFF 303099)).